A 197-amino-acid chain; its full sequence is Ribonuclease HII (197 aa).

The RNase H type-2 domain maps to Glu14–Asp197. Asp20, Glu21, and Asp112 together coordinate a divalent metal cation.

It belongs to the RNase HII family. Requires Mn(2+) as cofactor. Mg(2+) serves as cofactor.

The protein localises to the cytoplasm. It carries out the reaction Endonucleolytic cleavage to 5'-phosphomonoester.. Endonuclease that specifically degrades the RNA of RNA-DNA hybrids. The sequence is that of Ribonuclease HII from Sulfurihydrogenibium sp. (strain YO3AOP1).